Consider the following 158-residue polypeptide: Cyclic pyranopterin monophosphate synthase (158 aa).

Substrate contacts are provided by residues 75-77 (LCH) and 113-114 (ME). Asp128 is a catalytic residue.

It belongs to the MoaC family. As to quaternary structure, homohexamer; trimer of dimers.

It catalyses the reaction (8S)-3',8-cyclo-7,8-dihydroguanosine 5'-triphosphate = cyclic pyranopterin phosphate + diphosphate. The protein operates within cofactor biosynthesis; molybdopterin biosynthesis. Its function is as follows. Catalyzes the conversion of (8S)-3',8-cyclo-7,8-dihydroguanosine 5'-triphosphate to cyclic pyranopterin monophosphate (cPMP). This chain is Cyclic pyranopterin monophosphate synthase, found in Histophilus somni (strain 129Pt) (Haemophilus somnus).